Here is a 204-residue protein sequence, read N- to C-terminus: dITP/XTP pyrophosphatase (204 aa).

A substrate-binding site is contributed by 14 to 19 (THNKGK). Mg(2+) is bound by residues Glu-46 and Asp-75. Catalysis depends on Asp-75, which acts as the Proton acceptor. Substrate-binding positions include Ser-76, 161-164 (FGYD), Lys-184, and 189-190 (HR).

The protein belongs to the HAM1 NTPase family. In terms of assembly, homodimer. Mg(2+) is required as a cofactor.

It catalyses the reaction XTP + H2O = XMP + diphosphate + H(+). It carries out the reaction dITP + H2O = dIMP + diphosphate + H(+). The enzyme catalyses ITP + H2O = IMP + diphosphate + H(+). Functionally, pyrophosphatase that catalyzes the hydrolysis of nucleoside triphosphates to their monophosphate derivatives, with a high preference for the non-canonical purine nucleotides XTP (xanthosine triphosphate), dITP (deoxyinosine triphosphate) and ITP. Seems to function as a house-cleaning enzyme that removes non-canonical purine nucleotides from the nucleotide pool, thus preventing their incorporation into DNA/RNA and avoiding chromosomal lesions. The polypeptide is dITP/XTP pyrophosphatase (Ruegeria pomeroyi (strain ATCC 700808 / DSM 15171 / DSS-3) (Silicibacter pomeroyi)).